A 166-amino-acid chain; its full sequence is Crossover junction endodeoxyribonuclease RuvC (166 aa).

Catalysis depends on residues aspartate 7, glutamate 68, and aspartate 141. Mg(2+) contacts are provided by aspartate 7, glutamate 68, and aspartate 141.

This sequence belongs to the RuvC family. In terms of assembly, homodimer which binds Holliday junction (HJ) DNA. The HJ becomes 2-fold symmetrical on binding to RuvC with unstacked arms; it has a different conformation from HJ DNA in complex with RuvA. In the full resolvosome a probable DNA-RuvA(4)-RuvB(12)-RuvC(2) complex forms which resolves the HJ. Mg(2+) is required as a cofactor.

It is found in the cytoplasm. It carries out the reaction Endonucleolytic cleavage at a junction such as a reciprocal single-stranded crossover between two homologous DNA duplexes (Holliday junction).. Functionally, the RuvA-RuvB-RuvC complex processes Holliday junction (HJ) DNA during genetic recombination and DNA repair. Endonuclease that resolves HJ intermediates. Cleaves cruciform DNA by making single-stranded nicks across the HJ at symmetrical positions within the homologous arms, yielding a 5'-phosphate and a 3'-hydroxyl group; requires a central core of homology in the junction. The consensus cleavage sequence is 5'-(A/T)TT(C/G)-3'. Cleavage occurs on the 3'-side of the TT dinucleotide at the point of strand exchange. HJ branch migration catalyzed by RuvA-RuvB allows RuvC to scan DNA until it finds its consensus sequence, where it cleaves and resolves the cruciform DNA. This chain is Crossover junction endodeoxyribonuclease RuvC, found in Koribacter versatilis (strain Ellin345).